Reading from the N-terminus, the 662-residue chain is Zinc finger protein 17 (662 aa).

The KRAB domain maps to 8–101; sequence MVFEDVAIHF…LLKDILHLAE (94 aa). 16 consecutive C2H2-type zinc fingers follow at residues 190-212, 218-240, 246-268, 274-296, 302-324, 358-380, 386-408, 414-436, 442-464, 470-492, 498-520, 526-548, 554-576, 582-604, 610-632, and 638-660; these read YSCTQCGKDFCHQHTLFEHQKIH, YECSECGKLFRYNSDLIKHQRNH, YKCSECGKAFSLKYNVVQHQKIH, YECSECGKAFLRKSHLLQHQRIH, YVCSECGKAFLTQAHLVGHQKIH, FYCCECGKFFMDSCTLIIHQRVH, YECNECGKFFRYRSTLIRHQKVH, YECSECGKFFMDTSTLIIHQRVH, YECNKCGKFFRYCFTLNRHQRVH, YECSECGKFFVDSCTLKSHQRVH, FECSICGKSFRCRSTLDTHQRIH, YECSECGKFFRHNSNHIRHRRNH, FECTECGRVFSQNSHLIRHQKVH, YKCSKCGKFFMDSSTLISHERVH, YECSECGKVFRYNSSLIKHRRIH, and YQCSECGRVFNQNSHLIQHQKVH.

This sequence belongs to the krueppel C2H2-type zinc-finger protein family.

It localises to the nucleus. In terms of biological role, may be involved in transcriptional regulation. The protein is Zinc finger protein 17 (ZNF17) of Homo sapiens (Human).